A 1033-amino-acid chain; its full sequence is Probable LRR receptor-like serine/threonine-protein kinase At1g56140 (1033 aa).

Positions 1-28 are cleaved as a signal peptide; that stretch reads MLRLWRYLCLLLTVWFLCNFGPVYVVRA. Over 29–636 the chain is Extracellular; sequence QNRTGATTHP…PSKGKSMTGT (608 aa). N-linked (GlcNAc...) asparagine glycans are attached at residues N30, N60, and N94. LRR repeat units follow at residues 97 to 121, 122 to 145, 147 to 169, 170 to 193, 195 to 217, 241 to 264, 265 to 288, 289 to 313, 314 to 337, 339 to 361, 363 to 382, 383 to 406, and 422 to 445; these read ICRI…LWTL, EYLT…LGNL, RMRW…IGLL, TDLR…IGRC, KLQQ…FANL, WTKL…SFSN, LTSL…FIKD, MKSL…IGEY, SSLR…LFNL, QLTH…KGQS, SNVD…WVSL, PNLN…VLSG, and IYSD…VFER. N-linked (GlcNAc...) asparagine glycosylation occurs at N144. The N-linked (GlcNAc...) asparagine glycan is linked to N181. N-linked (GlcNAc...) asparagine glycans are attached at residues N264, N280, and N301. 2 N-linked (GlcNAc...) asparagine glycosylation sites follow: N347 and N351. N-linked (GlcNAc...) asparagine glycosylation is present at N393. The N-linked (GlcNAc...) asparagine glycan is linked to N579. Residues 637-657 form a helical membrane-spanning segment; it reads IVGVIVGVGLLSIISGVVIFI. Over 658-1033 the chain is Cytoplasmic; sequence IRKRRKRYTD…MLGAQMNEGR (376 aa). Phosphothreonine is present on T682. In terms of domain architecture, Protein kinase spans 693-951; sequence FDPSNKLGEG…LCTQTSHALR (259 aa). ATP-binding positions include 699–707 and K721; that span reads LGEGGFGPV. Y766 is subject to Phosphotyrosine. D817 serves as the catalytic Proton acceptor. Phosphoserine occurs at positions 821 and 850. 2 positions are modified to phosphothreonine: T851 and T856. Y864 carries the phosphotyrosine modification. Residues 1012-1033 form a disordered region; that stretch reads SEISPRNNDARPMLGAQMNEGR.

It belongs to the protein kinase superfamily. Ser/Thr protein kinase family.

The protein localises to the membrane. The catalysed reaction is L-seryl-[protein] + ATP = O-phospho-L-seryl-[protein] + ADP + H(+). It catalyses the reaction L-threonyl-[protein] + ATP = O-phospho-L-threonyl-[protein] + ADP + H(+). This chain is Probable LRR receptor-like serine/threonine-protein kinase At1g56140, found in Arabidopsis thaliana (Mouse-ear cress).